Reading from the N-terminus, the 165-residue chain is Small ribosomal subunit protein uS5 (165 aa).

Residues 13-76 (LEENVVSINR…EDAKRHLIKV (64 aa)) form the S5 DRBM domain.

It belongs to the universal ribosomal protein uS5 family. In terms of assembly, part of the 30S ribosomal subunit. Contacts proteins S4 and S8.

In terms of biological role, with S4 and S12 plays an important role in translational accuracy. Located at the back of the 30S subunit body where it stabilizes the conformation of the head with respect to the body. This Oenococcus oeni (strain ATCC BAA-331 / PSU-1) protein is Small ribosomal subunit protein uS5.